Reading from the N-terminus, the 78-residue chain is MLLEMDKIKITVDSKIGNVVTISYNLEKITIDVTPKKKKEKDVLLAQSVAVEEAKDVKVEEKNIIDIEDDDDMDVESA.

It belongs to the orthopoxvirus OPG173 protein family.

Its subcellular location is the host cytoplasm. Functionally, plays a role in the inhibition of host protein synthesis. Specifically, inhibits the initiation of cap-dependent and cap-independent translation. In turn, affects the outcome of infection by decreasing recruitment of inflammatory leukocytes and reducing the memory CD8+ T-cell response. This chain is Protein OPG173 (OPG173), found in Vaccinia virus (strain Western Reserve) (VACV).